Here is a 637-residue protein sequence, read N- to C-terminus: Chaperone protein HtpG (637 aa).

Residues 1 to 334 (MQDVVNSEKL…SSDLPLNISR (334 aa)) form an a; substrate-binding region. The tract at residues 335–558 (ETLQNNKVIE…DGSMDIRMER (224 aa)) is b. The segment at 559–637 (FLREQKQLNY…MNNVLVKVYQ (79 aa)) is c.

The protein belongs to the heat shock protein 90 family. Homodimer.

The protein localises to the cytoplasm. Its function is as follows. Molecular chaperone. Has ATPase activity. This is Chaperone protein HtpG from Ehrlichia canis (strain Jake).